A 137-amino-acid polypeptide reads, in one-letter code: Large ribosomal subunit protein uL16 (137 aa).

Residues 1–22 (MLQPKRTKFRKVQKGRNRGLAH) are disordered.

It belongs to the universal ribosomal protein uL16 family. In terms of assembly, part of the 50S ribosomal subunit.

Its function is as follows. Binds 23S rRNA and is also seen to make contacts with the A and possibly P site tRNAs. The sequence is that of Large ribosomal subunit protein uL16 from Chromohalobacter salexigens (strain ATCC BAA-138 / DSM 3043 / CIP 106854 / NCIMB 13768 / 1H11).